Here is a 341-residue protein sequence, read N- to C-terminus: Glycerol-3-phosphate dehydrogenase [NAD(P)+] (341 aa).

NADPH-binding residues include serine 13, tryptophan 14, and lysine 108. Sn-glycerol 3-phosphate-binding residues include lysine 108, glycine 139, and serine 141. Residue alanine 143 coordinates NADPH. Residues lysine 194, aspartate 247, serine 257, arginine 258, and asparagine 259 each coordinate sn-glycerol 3-phosphate. Lysine 194 functions as the Proton acceptor in the catalytic mechanism. NADPH is bound at residue arginine 258. Positions 282 and 284 each coordinate NADPH.

The protein belongs to the NAD-dependent glycerol-3-phosphate dehydrogenase family.

The protein resides in the cytoplasm. It carries out the reaction sn-glycerol 3-phosphate + NAD(+) = dihydroxyacetone phosphate + NADH + H(+). It catalyses the reaction sn-glycerol 3-phosphate + NADP(+) = dihydroxyacetone phosphate + NADPH + H(+). It participates in membrane lipid metabolism; glycerophospholipid metabolism. In terms of biological role, catalyzes the reduction of the glycolytic intermediate dihydroxyacetone phosphate (DHAP) to sn-glycerol 3-phosphate (G3P), the key precursor for phospholipid synthesis. The chain is Glycerol-3-phosphate dehydrogenase [NAD(P)+] from Lactococcus lactis subsp. lactis (strain IL1403) (Streptococcus lactis).